We begin with the raw amino-acid sequence, 2201 residues long: RNA-directed RNA polymerase L (2201 aa).

The endonuclease stretch occupies residues 26–285 (KNIMLAQTQI…VCSKSVEYTF (260 aa)). 3 residues coordinate Mn(2+): Glu51, Asp88, and Glu101. Lys114 is an active-site residue. Residues 1156-1352 (LDMKSVVRQS…FLSDRLNKFV (197 aa)) enclose the RdRp catalytic domain. Residue Asp1312 participates in Mg(2+) binding.

This sequence belongs to the Bunyavirales RNA polymerase family. As to quaternary structure, homomultimer; the oligomeric structure is essential for the polymerase activity. Interacts with nucleoprotein N. Interacts with protein Z; this interaction inhibits viral transcription and replication, Z partially blocks the product exit tunnel for the releasing nascent RNA product. It depends on Mn(2+) as a cofactor. The cofactor is Mg(2+).

The protein resides in the virion. Its subcellular location is the host cytoplasm. It carries out the reaction RNA(n) + a ribonucleoside 5'-triphosphate = RNA(n+1) + diphosphate. In terms of biological role, RNA-dependent RNA polymerase, which is responsible for the replication and transcription of the viral RNA genome using antigenomic RNA as an intermediate. During transcription, synthesizes subgenomic RNAs and assures their capping by a cap-snatching mechanism, which involves the endonuclease activity cleaving the host capped pre-mRNAs. These short capped RNAs are then used as primers for viral transcription. The 3'-end of subgenomic mRNAs molecules are heterogeneous and not polyadenylated. The replicase function is to direct synthesis of antigenomic and genomic RNA which are encapsidated and non capped. As a consequence of the use of the same enzyme for both transcription and replication, these mechanisms need to be well coordinated. These processes may be regulated by proteins N and Z in a dose-dependent manner. Z protein inhibits the viral polymerase L und thus the viral transcription and RNA synthesis. In Oecomys bicolor (Bicolored arboreal rice rat), this protein is RNA-directed RNA polymerase L.